A 234-amino-acid chain; its full sequence is Phosphoribosylaminoimidazole-succinocarboxamide synthase (234 aa).

This sequence belongs to the SAICAR synthetase family.

It catalyses the reaction 5-amino-1-(5-phospho-D-ribosyl)imidazole-4-carboxylate + L-aspartate + ATP = (2S)-2-[5-amino-1-(5-phospho-beta-D-ribosyl)imidazole-4-carboxamido]succinate + ADP + phosphate + 2 H(+). The protein operates within purine metabolism; IMP biosynthesis via de novo pathway; 5-amino-1-(5-phospho-D-ribosyl)imidazole-4-carboxamide from 5-amino-1-(5-phospho-D-ribosyl)imidazole-4-carboxylate: step 1/2. The sequence is that of Phosphoribosylaminoimidazole-succinocarboxamide synthase from Staphylococcus epidermidis (strain ATCC 35984 / DSM 28319 / BCRC 17069 / CCUG 31568 / BM 3577 / RP62A).